We begin with the raw amino-acid sequence, 440 residues long: Serine hydroxymethyltransferase (440 aa).

(6S)-5,6,7,8-tetrahydrofolate is bound by residues L119 and 123-125 (GHL). At K228 the chain carries N6-(pyridoxal phosphate)lysine. Residue 370-372 (SPF) participates in (6S)-5,6,7,8-tetrahydrofolate binding.

It belongs to the SHMT family. As to quaternary structure, homodimer. The cofactor is pyridoxal 5'-phosphate.

Its subcellular location is the cytoplasm. It carries out the reaction (6R)-5,10-methylene-5,6,7,8-tetrahydrofolate + glycine + H2O = (6S)-5,6,7,8-tetrahydrofolate + L-serine. It functions in the pathway one-carbon metabolism; tetrahydrofolate interconversion. It participates in amino-acid biosynthesis; glycine biosynthesis; glycine from L-serine: step 1/1. Functionally, catalyzes the reversible interconversion of serine and glycine with tetrahydrofolate (THF) serving as the one-carbon carrier. This reaction serves as the major source of one-carbon groups required for the biosynthesis of purines, thymidylate, methionine, and other important biomolecules. Also exhibits THF-independent aldolase activity toward beta-hydroxyamino acids, producing glycine and aldehydes, via a retro-aldol mechanism. This chain is Serine hydroxymethyltransferase, found in Chlorobaculum parvum (strain DSM 263 / NCIMB 8327) (Chlorobium vibrioforme subsp. thiosulfatophilum).